The primary structure comprises 156 residues: Melatonin receptor type 1A (156 aa).

Transmembrane regions (helical) follow at residues 19 to 39, 62 to 82, and 115 to 135; these read LCYVFLIWTLTLIAIMPNLQT, TIALVVFHFVVPMIIVTFCYL, and FVVFVLFALCWAPLNFIGLIV.

It belongs to the G-protein coupled receptor 1 family. At least in the brain, more precisely in the pars tuberalis and the suprachiasmatic nucleus.

The protein resides in the cell membrane. High affinity receptor for melatonin. Likely to mediate the reproductive and circadian actions of melatonin. The activity of this receptor is mediated by pertussis toxin sensitive G proteins that inhibit adenylate cyclase activity. Possibly involved in sleep induction, by melatonin activation of the potassium channel KCNMA1/BK and the dissociation of G-beta and G-gamma subunits, thereby decreasing synaptic transmission. The protein is Melatonin receptor type 1A (Mtnr1a) of Rattus norvegicus (Rat).